Here is a 303-residue protein sequence, read N- to C-terminus: N-acetylmuramic acid 6-phosphate etherase (303 aa).

The region spanning 62–225 (IVAAFRQGGR…TTASMVLLGK (164 aa)) is the SIS domain. Catalysis depends on Glu90, which acts as the Proton donor. Residue Glu121 is part of the active site.

It belongs to the GCKR-like family. MurNAc-6-P etherase subfamily. Homodimer.

It catalyses the reaction N-acetyl-D-muramate 6-phosphate + H2O = N-acetyl-D-glucosamine 6-phosphate + (R)-lactate. Its pathway is amino-sugar metabolism; 1,6-anhydro-N-acetylmuramate degradation. The protein operates within amino-sugar metabolism; N-acetylmuramate degradation. It participates in cell wall biogenesis; peptidoglycan recycling. Specifically catalyzes the cleavage of the D-lactyl ether substituent of MurNAc 6-phosphate, producing GlcNAc 6-phosphate and D-lactate. Together with AnmK, is also required for the utilization of anhydro-N-acetylmuramic acid (anhMurNAc) either imported from the medium or derived from its own cell wall murein, and thus plays a role in cell wall recycling. This Histophilus somni (strain 129Pt) (Haemophilus somnus) protein is N-acetylmuramic acid 6-phosphate etherase.